The primary structure comprises 78 residues: Chondrosarcoma-associated gene 1 protein (78 aa).

Residues 1–19 (MSATTACWPAFTVLGEARG) form the signal peptide. Positions 35–78 (KMSRKPRASSPFSNNHPSTPKRFPRQPRREKGPVKEVPGTKGSP) are disordered.

In terms of tissue distribution, expressed in chondrosarcoma, melanoma, cartilage and testis, but not in other normal tissues.

The protein localises to the cytoplasm. The protein resides in the cytoskeleton. Its subcellular location is the microtubule organizing center. It localises to the centrosome. It is found in the spindle pole. May play an important role in maintaining centrosome integrity during mitosis. The protein is Chondrosarcoma-associated gene 1 protein of Homo sapiens (Human).